We begin with the raw amino-acid sequence, 364 residues long: tRNA N6-adenosine threonylcarbamoyltransferase (364 aa).

Fe cation is bound by residues H115 and H119. Substrate-binding positions include 137–141 (LVSGG), D170, G183, and N288. Residue D316 participates in Fe cation binding.

This sequence belongs to the KAE1 / TsaD family. Fe(2+) is required as a cofactor.

The protein localises to the cytoplasm. The catalysed reaction is L-threonylcarbamoyladenylate + adenosine(37) in tRNA = N(6)-L-threonylcarbamoyladenosine(37) in tRNA + AMP + H(+). In terms of biological role, required for the formation of a threonylcarbamoyl group on adenosine at position 37 (t(6)A37) in tRNAs that read codons beginning with adenine. Is involved in the transfer of the threonylcarbamoyl moiety of threonylcarbamoyl-AMP (TC-AMP) to the N6 group of A37, together with TsaE and TsaB. TsaD likely plays a direct catalytic role in this reaction. The protein is tRNA N6-adenosine threonylcarbamoyltransferase of Bartonella tribocorum (strain CIP 105476 / IBS 506).